Consider the following 431-residue polypeptide: Ribosomal protein uS12 methylthiotransferase RimO (431 aa).

An MTTase N-terminal domain is found at His4–His120. The [4Fe-4S] cluster site is built by Cys13, Cys49, Cys83, Cys144, Cys148, and Cys151. The Radical SAM core domain occupies Leu130 to Asp359. Residues Arg362–Gly429 enclose the TRAM domain.

It belongs to the methylthiotransferase family. RimO subfamily. [4Fe-4S] cluster serves as cofactor.

The protein resides in the cytoplasm. The catalysed reaction is L-aspartate(89)-[ribosomal protein uS12]-hydrogen + (sulfur carrier)-SH + AH2 + 2 S-adenosyl-L-methionine = 3-methylsulfanyl-L-aspartate(89)-[ribosomal protein uS12]-hydrogen + (sulfur carrier)-H + 5'-deoxyadenosine + L-methionine + A + S-adenosyl-L-homocysteine + 2 H(+). In terms of biological role, catalyzes the methylthiolation of an aspartic acid residue of ribosomal protein uS12. This is Ribosomal protein uS12 methylthiotransferase RimO from Pelodictyon phaeoclathratiforme (strain DSM 5477 / BU-1).